A 321-amino-acid chain; its full sequence is Annexin D3 (321 aa).

Position 2 is an N-acetylalanine (Ala2). 4 Annexin repeats span residues 11–82 (PSPA…SWTY), 83–159 (DPAE…TLAS), 171–243 (EVAT…VAIF), and 247–318 (TPEK…TLLG). Residues Gly26, Gly28, and Glu68 each coordinate Ca(2+). Phosphothreonine is present on Thr117. Ca(2+) is bound by residues Ile260 and Gly264. Phosphotyrosine is present on Tyr289. Asp304 provides a ligand contact to Ca(2+).

Belongs to the annexin (TC 1.A.31.1) family. Expressed mainly in roots and flowers. Lower in stems and leaves.

The protein is Annexin D3 (ANN3) of Arabidopsis thaliana (Mouse-ear cress).